Consider the following 155-residue polypeptide: uncharacterized protein (155 aa).

Basic and acidic residues predominate over residues 28–38 (KKGKDRPREDG). Positions 28-52 (KKGKDRPREDGTQQQPSESKGEAAC) are disordered.

This is an uncharacterized protein from Dryophytes versicolor (chameleon treefrog).